Here is a 236-residue protein sequence, read N- to C-terminus: Transcriptional activator protein SolR (236 aa).

One can recognise an HTH luxR-type domain in the interval 169-234; that stretch reads VPESSAALTA…QAVVKAIAIG (66 aa). The segment at residues 193 to 212 is a DNA-binding region (H-T-H motif); that stretch reads AYEIGQILRISERTVNFHVN.

The protein belongs to the autoinducer-regulated transcriptional regulatory protein family.

The chain is Transcriptional activator protein SolR (solR) from Ralstonia nicotianae (strain ATCC BAA-1114 / GMI1000) (Ralstonia solanacearum).